The primary structure comprises 59 residues: UPF0391 membrane protein lpl2443 (59 aa).

A run of 2 helical transmembrane segments spans residues Ala5–Val25 and Ile30–Leu50.

This sequence belongs to the UPF0391 family.

Its subcellular location is the cell membrane. This chain is UPF0391 membrane protein lpl2443, found in Legionella pneumophila (strain Lens).